The primary structure comprises 468 residues: Glutamate--tRNA ligase (468 aa).

A 'HIGH' region motif is present at residues 10–20 (PSPTGYLHIGG). The 'KMSKS' region signature appears at 252–256 (KLSKR). Position 255 (lysine 255) interacts with ATP.

Belongs to the class-I aminoacyl-tRNA synthetase family. Glutamate--tRNA ligase type 1 subfamily. Monomer.

The protein resides in the cytoplasm. It catalyses the reaction tRNA(Glu) + L-glutamate + ATP = L-glutamyl-tRNA(Glu) + AMP + diphosphate. In terms of biological role, catalyzes the attachment of glutamate to tRNA(Glu) in a two-step reaction: glutamate is first activated by ATP to form Glu-AMP and then transferred to the acceptor end of tRNA(Glu). The sequence is that of Glutamate--tRNA ligase from Mycoplasmopsis pulmonis (strain UAB CTIP) (Mycoplasma pulmonis).